A 465-amino-acid chain; its full sequence is Ras-like GTPase YcjX (465 aa).

The Walker A motif motif lies at 26–33; that stretch reads GLSRSGKT. Positions 28, 31, 32, 33, 34, 95, 99, and 100 each coordinate GTP. Residues Gly31, Lys32, Thr33, Ala34, Trp95, and Thr99 each coordinate GDP. Lys249 carries the N6-acetyllysine modification. GTP is bound by residues Lys338, Asp340, His341, and Val380. GDP-binding residues include Lys338, Asp340, His341, and Val380.

This sequence to H.influenzae HI_1637. Monomer in solution. Requires Mg(2+) as cofactor.

The catalysed reaction is GTP + H2O = GDP + phosphate + H(+). With respect to regulation, alternates between an inactive form bound to GDP and an active form bound to GTP. Likely activated by a guanine nucleotide-exchange factor (GEF). In terms of biological role, binds GTP and GDP. Has intrinsic GTPase activity. Does not hydrolyze ATP. May act as a transducer of stress responses. The polypeptide is Ras-like GTPase YcjX (ycjX) (Escherichia coli (strain K12)).